Reading from the N-terminus, the 502-residue chain is Cyanidin 3-O-glucoside 5-O-glucosyltransferase (acyl-glucose) (502 aa).

An N-terminal signal peptide occupies residues 1–30; the sequence is MNMSCKFEIVLLVSWWLLLVLVFGVESSMF. Residue asparagine 2 is glycosylated (N-linked (GlcNAc...) asparagine). Residues glutamine 52, histidine 150, and 196–197 contribute to the a beta-D-glucoside site; that span reads NE. The active-site Proton donor is glutamate 197. The N-linked (GlcNAc...) asparagine glycan is linked to asparagine 303. A beta-D-glucoside-binding residues include tyrosine 320 and glutamate 388. Glutamate 388 acts as the Nucleophile in catalysis. N-linked (GlcNAc...) asparagine glycosylation is present at asparagine 425. Residues tryptophan 435 and phenylalanine 451 each coordinate a beta-D-glucoside.

It belongs to the glycosyl hydrolase 1 family. In terms of tissue distribution, expressed in petals.

The protein resides in the vacuole. It catalyses the reaction cyanidin 3-O-beta-D-glucoside + 1-O-(trans-sinapoyl)-beta-D-glucose = cyanidin 3,5-di-O-beta-D-glucoside + (E)-sinapate. It participates in pigment biosynthesis; anthocyanin biosynthesis. Its function is as follows. Beta-glycosidase that catalyzes the transfer of glucose moiety to anthocyanidin 3-glucoside at the 5 position. Anthocyanins are ubiquitous colored pigments that are responsible for variations in petal color. Uses acyl-glucoses, but not UDP-glucose, as the glucose donor. This is Cyanidin 3-O-glucoside 5-O-glucosyltransferase (acyl-glucose) (AA5GT) from Dianthus caryophyllus (Carnation).